A 249-amino-acid chain; its full sequence is GTP cyclohydrolase III (249 aa).

This sequence belongs to the archaeal-type GTP cyclohydrolase family.

The catalysed reaction is GTP + 3 H2O = 2-amino-5-formylamino-6-(5-phospho-D-ribosylamino)pyrimidin-4(3H)-one + 2 phosphate + 2 H(+). Its function is as follows. Catalyzes the formation of 2-amino-5-formylamino-6-ribofuranosylamino-4(3H)-pyrimidinone ribonucleotide monophosphate and inorganic phosphate from GTP. Also has an independent pyrophosphate phosphohydrolase activity. The sequence is that of GTP cyclohydrolase III from Methanothermobacter thermautotrophicus (strain ATCC 29096 / DSM 1053 / JCM 10044 / NBRC 100330 / Delta H) (Methanobacterium thermoautotrophicum).